A 242-amino-acid chain; its full sequence is Caffeoyl-CoA O-methyltransferase 4 (242 aa).

Lys-16 is a substrate binding site. Residues Thr-58, Glu-80, 82–83, Ser-88, Asp-106, and Ala-135 each bind S-adenosyl-L-methionine; that span reads GV. Substrate is bound at residue Asp-158. A divalent metal cation is bound at residue Asp-158. Asp-160 contributes to the S-adenosyl-L-methionine binding site. A divalent metal cation-binding residues include Asp-184 and Asn-185. Asn-189 contributes to the substrate binding site.

Belongs to the class I-like SAM-binding methyltransferase superfamily. Cation-dependent O-methyltransferase family. CCoAMT subfamily. Requires Mg(2+) as cofactor. As to expression, mostly expressed in the bottom and middle parts of the stems.

The catalysed reaction is (E)-caffeoyl-CoA + S-adenosyl-L-methionine = (E)-feruloyl-CoA + S-adenosyl-L-homocysteine + H(+). It functions in the pathway aromatic compound metabolism; phenylpropanoid biosynthesis. Functionally, methylates caffeoyl-CoA to feruloyl-CoA and 5-hydroxyferuloyl-CoA to sinapoyl-CoA. Plays a role in the synthesis of feruloylated polysaccharides. Involved in the reinforcement of the plant cell wall. Also involved in the responding to wounding or pathogen challenge by the increased formation of cell wall-bound ferulic acid polymers. The protein is Caffeoyl-CoA O-methyltransferase 4 (CCOAOMT4) of Nicotiana tabacum (Common tobacco).